The following is a 343-amino-acid chain: GTPase Obg (343 aa).

The Obg domain maps to M1–L159. An OBG-type G domain is found at A160 to E334. GTP contacts are provided by residues G166–S173, F191–Y195, D213–G216, N284–D287, and S315–L317. 2 residues coordinate Mg(2+): S173 and T193.

The protein belongs to the TRAFAC class OBG-HflX-like GTPase superfamily. OBG GTPase family. As to quaternary structure, monomer. Mg(2+) is required as a cofactor.

The protein resides in the cytoplasm. An essential GTPase which binds GTP, GDP and possibly (p)ppGpp with moderate affinity, with high nucleotide exchange rates and a fairly low GTP hydrolysis rate. Plays a role in control of the cell cycle, stress response, ribosome biogenesis and in those bacteria that undergo differentiation, in morphogenesis control. In Nitrosomonas eutropha (strain DSM 101675 / C91 / Nm57), this protein is GTPase Obg.